The following is a 396-amino-acid chain: Phosphoglycerate kinase (396 aa).

Substrate-binding positions include 21-23 (DFN), arginine 37, 60-63 (HLGR), arginine 121, and arginine 154. ATP contacts are provided by residues lysine 205, glycine 296, glutamate 327, and 353–356 (GGDS).

Belongs to the phosphoglycerate kinase family. Monomer.

The protein resides in the cytoplasm. The catalysed reaction is (2R)-3-phosphoglycerate + ATP = (2R)-3-phospho-glyceroyl phosphate + ADP. Its pathway is carbohydrate degradation; glycolysis; pyruvate from D-glyceraldehyde 3-phosphate: step 2/5. The sequence is that of Phosphoglycerate kinase from Anaeromyxobacter sp. (strain Fw109-5).